We begin with the raw amino-acid sequence, 461 residues long: Photosystem II CP43 reaction center protein (461 aa).

A propeptide spanning residues Met1–Glu2 is cleaved from the precursor. At Thr3 the chain carries N-acetylthreonine. Thr3 bears the Phosphothreonine mark. Transmembrane regions (helical) follow at residues Leu57–Ala81, Leu122–Asn143, Lys166–Thr188, Lys243–Ser263, and Trp279–Ala300. Glu355 provides a ligand contact to [CaMn4O5] cluster. The helical transmembrane segment at Arg435–Pro459 threads the bilayer.

The protein belongs to the PsbB/PsbC family. PsbC subfamily. As to quaternary structure, PSII is composed of 1 copy each of membrane proteins PsbA, PsbB, PsbC, PsbD, PsbE, PsbF, PsbH, PsbI, PsbJ, PsbK, PsbL, PsbM, PsbT, PsbX, PsbY, PsbZ, Psb30/Ycf12, at least 3 peripheral proteins of the oxygen-evolving complex and a large number of cofactors. It forms dimeric complexes. The cofactor is Binds multiple chlorophylls and provides some of the ligands for the Ca-4Mn-5O cluster of the oxygen-evolving complex. It may also provide a ligand for a Cl- that is required for oxygen evolution. PSII binds additional chlorophylls, carotenoids and specific lipids..

Its subcellular location is the plastid. The protein localises to the chloroplast thylakoid membrane. In terms of biological role, one of the components of the core complex of photosystem II (PSII). It binds chlorophyll and helps catalyze the primary light-induced photochemical processes of PSII. PSII is a light-driven water:plastoquinone oxidoreductase, using light energy to abstract electrons from H(2)O, generating O(2) and a proton gradient subsequently used for ATP formation. This is Photosystem II CP43 reaction center protein from Nandina domestica (Heavenly bamboo).